The primary structure comprises 117 residues: Anti-adapter protein IraM (117 aa).

This sequence belongs to the IraM/RssC family.

The protein resides in the cytoplasm. Its function is as follows. Involved in the stabilization of the sigma stress factor RpoS. This chain is Anti-adapter protein IraM, found in Klebsiella pneumoniae (strain 342).